The sequence spans 438 residues: 5-methylthioadenosine/S-adenosylhomocysteine deaminase (438 aa).

His-71 and His-73 together coordinate Zn(2+). Substrate is bound by residues Glu-100 and His-192. His-219 contacts Zn(2+). Residues Glu-222 and Asp-307 each coordinate substrate. Residue Asp-307 participates in Zn(2+) binding.

Belongs to the metallo-dependent hydrolases superfamily. MTA/SAH deaminase family. Requires Zn(2+) as cofactor.

The catalysed reaction is S-adenosyl-L-homocysteine + H2O + H(+) = S-inosyl-L-homocysteine + NH4(+). It catalyses the reaction S-methyl-5'-thioadenosine + H2O + H(+) = S-methyl-5'-thioinosine + NH4(+). In terms of biological role, catalyzes the deamination of 5-methylthioadenosine and S-adenosyl-L-homocysteine into 5-methylthioinosine and S-inosyl-L-homocysteine, respectively. Is also able to deaminate adenosine. This is 5-methylthioadenosine/S-adenosylhomocysteine deaminase from Syntrophobacter fumaroxidans (strain DSM 10017 / MPOB).